We begin with the raw amino-acid sequence, 90 residues long: Conotoxin ba9a (90 aa).

Positions 1–27 (MHLSLARSAGLMWLLLFAVGNFVGVQP) are cleaved as a signal peptide. A propeptide spanning residues 28 to 62 (GQITRDVDNGQLADNRRNLQSLRKPMTLFKSLNKR) is cleaved from the precursor. Glu67 is modified (4-carboxyglutamate). Residues Pro76 and Pro80 each carry the 4-hydroxyproline modification.

Expressed by the venom duct.

The protein resides in the secreted. The protein is Conotoxin ba9a of Conus bayani (Bayan's cone).